The following is a 203-amino-acid chain: RNA annealing protein YRA2 (203 aa).

Met1 bears the N-acetylmethionine mark. Disordered stretches follow at residues 1–60 (MDKA…REEP) and 137–203 (QPQR…YMKG). A compositionally biased stretch (polar residues) spans 11-20 (NSHTDSSSNH). Residues 47–60 (SRSKDRLYREREEP) are compositionally biased toward basic and acidic residues. The RRM domain maps to 64–138 (KRIRISKIPL…AKIEVEIYQP (75 aa)). Residues 139-153 (QRKHSRMNAHNRRKQ) are compositionally biased toward basic residues. Basic and acidic residues predominate over residues 154-164 (TAQEHGRDRPG). The segment covering 165-180 (SHYRQKPNRVSKKNKG) has biased composition (basic residues).

It belongs to the YRA1 family. As to quaternary structure, associates with mRNPs. Interacts with YRA1.

It localises to the nucleus. Its function is as follows. Involved in export of poly(A) mRNAs from the nucleus. Recruited to the coding sequences as well as poly-A sites of active genes. The polypeptide is RNA annealing protein YRA2 (YRA2) (Saccharomyces cerevisiae (strain YJM789) (Baker's yeast)).